Reading from the N-terminus, the 248-residue chain is Probable transcriptional regulatory protein Desal_2886 (248 aa).

Residues 1-21 (MAGHSKWANIQHRKGRQDAKR) are disordered.

It belongs to the TACO1 family.

It is found in the cytoplasm. The chain is Probable transcriptional regulatory protein Desal_2886 from Maridesulfovibrio salexigens (strain ATCC 14822 / DSM 2638 / NCIMB 8403 / VKM B-1763) (Desulfovibrio salexigens).